The chain runs to 306 residues: Brix domain-containing protein C4F8.04 (306 aa).

A disordered region spans residues 16–49; that stretch reads KALHQKNKDKLERRKERAKEEEKDPEKKRLRLSE. Positions 21-42 are enriched in basic and acidic residues; that stretch reads KNKDKLERRKERAKEEEKDPEK. The Brix domain occupies 94-283; that stretch reads PKLLVTTSKR…LRMVQKGVWD (190 aa).

In Schizosaccharomyces pombe (strain 972 / ATCC 24843) (Fission yeast), this protein is Brix domain-containing protein C4F8.04.